The following is a 372-amino-acid chain: Fatty acid 2-hydroxylase (372 aa).

A Cytochrome b5 heme-binding domain is found at 8 to 86 (AASFSPSEVQ…LEQYYVGELR (79 aa)). Heme is bound by residues H43 and H69. The next 2 membrane-spanning stretches (helical) occupy residues 168–188 (VWYSVPIIWVPLVLYLSWSYY) and 213–233 (SMFPGLFMLGTFLWSLIEYLI). One can recognise a Fatty acid hydroxylase domain in the interval 219-361 (FMLGTFLWSL…TKLWDYCFHT (143 aa)). Residues H234, H239, H257, H260, and H261 each coordinate Zn(2+). Transmembrane regions (helical) follow at residues 268–288 (SRLVFPPVPASLVIGVFYLCM) and 290–310 (LILPEAVGGTVFAGGLLGYVL). Zn(2+) contacts are provided by H315, H319, H336, H339, and H340.

This sequence belongs to the sterol desaturase family. SCS7 subfamily. The cofactor is Zn(2+). Detected in differentiating cultured keratinocytes (at protein level). Detected in epidermis and cultured keratinocytes. Highly expressed in brain and colon. Detected at lower levels in testis, prostate, pancreas and kidney.

It localises to the endoplasmic reticulum membrane. The protein localises to the microsome membrane. The catalysed reaction is a 1,2-saturated fatty acid + 2 Fe(II)-[cytochrome b5] + O2 + 2 H(+) = a (R)-2-hydroxy fatty acid + 2 Fe(III)-[cytochrome b5] + H2O. It carries out the reaction hexadecanoate + 2 Fe(II)-[cytochrome b5] + O2 + 2 H(+) = (R)-2-hydroxyhexadecanoate + 2 Fe(III)-[cytochrome b5] + H2O. The enzyme catalyses octadecanoate + 2 Fe(II)-[cytochrome b5] + O2 + 2 H(+) = (R)-2-hydroxyoctadecanoate + 2 Fe(III)-[cytochrome b5] + H2O. It catalyses the reaction docosanoate + 2 Fe(II)-[cytochrome b5] + O2 + 2 H(+) = 2-hydroxydocosanoate + 2 Fe(III)-[cytochrome b5] + H2O. The catalysed reaction is tetracosanoate + 2 Fe(II)-[cytochrome b5] + O2 + 2 H(+) = (R)-2-hydroxytetracosanoate + 2 Fe(III)-[cytochrome b5] + H2O. Its pathway is lipid metabolism; fatty acid metabolism. It functions in the pathway sphingolipid metabolism; galactosylceramide biosynthesis. Functionally, catalyzes the hydroxylation of free fatty acids at the C-2 position to produce 2-hydroxy fatty acids, which are building blocks of sphingolipids and glycosphingolipids common in neural tissue and epidermis. FA2H is stereospecific for the production of (R)-2-hydroxy fatty acids. Plays an essential role in the synthesis of galactosphingolipids of the myelin sheath. Responsible for the synthesis of sphingolipids and glycosphingolipids involved in the formation of epidermal lamellar bodies critical for skin permeability barrier. Participates in the synthesis of glycosphingolipids and a fraction of type II wax diesters in sebaceous gland, specifically regulating hair follicle homeostasis. Involved in the synthesis of sphingolipids of plasma membrane rafts, controlling lipid raft mobility and trafficking of raft-associated proteins. The sequence is that of Fatty acid 2-hydroxylase from Homo sapiens (Human).